Here is a 116-residue protein sequence, read N- to C-terminus: uncharacterized protein (116 aa).

The next 3 membrane-spanning stretches (helical) occupy residues 5–27 (AILL…AVPC), 42–64 (PFVP…TAGV), and 88–110 (VLHG…VVAI).

It is found in the cell membrane. This is an uncharacterized protein from Archaeoglobus fulgidus (strain ATCC 49558 / DSM 4304 / JCM 9628 / NBRC 100126 / VC-16).